The primary structure comprises 209 residues: COP9 signalosome complex subunit 8 (209 aa).

The PCI domain occupies 8–179; sequence DNAFSFRKLL…GTLDVSLNRF (172 aa). S175 carries the post-translational modification Phosphoserine.

The protein belongs to the CSN8 family. As to quaternary structure, component of the CSN complex, composed of COPS1/GPS1, COPS2, COPS3, COPS4, COPS5, COPS6, COPS7 (COPS7A or COPS7B), COPS8 and COPS9. In the complex, it probably interacts directly with COPS3, COPS4 and COPS7 (COPS7A or COPS7B). Widely expressed.

The protein localises to the cytoplasm. It localises to the nucleus. Its function is as follows. Component of the COP9 signalosome complex (CSN), a complex involved in various cellular and developmental processes. The CSN complex is an essential regulator of the ubiquitin (Ubl) conjugation pathway by mediating the deneddylation of the cullin subunits of SCF-type E3 ligase complexes, leading to decrease the Ubl ligase activity of SCF-type complexes such as SCF, CSA or DDB2. The complex is also involved in phosphorylation of p53/TP53, c-jun/JUN, IkappaBalpha/NFKBIA, ITPK1 and IRF8/ICSBP, possibly via its association with CK2 and PKD kinases. CSN-dependent phosphorylation of TP53 and JUN promotes and protects degradation by the Ubl system, respectively. The protein is COP9 signalosome complex subunit 8 (Cops8) of Mus musculus (Mouse).